A 397-amino-acid chain; its full sequence is Potassium channel subfamily K member 4 (397 aa).

The Cytoplasmic segment spans residues 1–3; the sequence is MRS. A helical membrane pass occupies residues 4–24; sequence TTLLALLALVLLYLVSGALVF. Residues 25–88 lie on the Extracellular side of the membrane; it reads QALEQPHEQQ…WTNSSNHSSA (64 aa). Asparagine 81 carries N-linked (GlcNAc...) asparagine glycosylation. Residues 89–103 constitute an intramembrane region (helical); it reads WNLGSAFFFSGTIIT. Residues threonine 104, isoleucine 105, glycine 106, and tyrosine 107 each coordinate K(+). A selectivity filter 1 region spans residues 104–109; that stretch reads TIGYGN. An intramembrane segment occupies 104–110; that stretch reads TIGYGNI. Residues 111–118 are Extracellular-facing; the sequence is ALHTDAGR. A helical transmembrane segment spans residues 119 to 151; that stretch reads LFCIFYALVGIPLFGMLLAGVGDRLGSSLRRGI. Residues 152–173 are Cytoplasmic-facing; it reads GHIEAVFLKWHVPPGLVRMLSA. Residues 174-195 form a helical membrane-spanning segment; it reads VLFLLIGCLLFVLTPTFVFSYM. The Extracellular portion of the chain corresponds to 196-200; the sequence is ESWSK. Positions 201–214 form an intramembrane region, helical; that stretch reads LEAIYFVIVTLTTV. Threonine 213, valine 214, glycine 215, and phenylalanine 216 together coordinate K(+). The selectivity filter 2 stretch occupies residues 213 to 218; the sequence is TVGFGD. An intramembrane segment occupies 215–220; that stretch reads GFGDYV. At 221–234 the chain is on the extracellular side; that stretch reads PGDGTGQNSPAYQP. Residues 235 to 261 traverse the membrane as a helical segment; sequence LVWFWILFGLAYFASVLTTIGNWLRAV. Topologically, residues 262 to 397 are cytoplasmic; the sequence is SRRTRAEMGG…GRLRDKAVPV (136 aa). A compositionally biased stretch (polar residues) spans 282–292; that stretch reads TVTARVTQRTG. Residues 282–397 form a disordered region; the sequence is TVTARVTQRT…GRLRDKAVPV (116 aa). Over residues 369-388 the composition is skewed to basic residues; the sequence is PRGRRRPNPTKKPSRPRGPG.

Belongs to the two pore domain potassium channel (TC 1.A.1.8) family. Homodimer; disulfide-linked. Forms heterodimers with other 2-pore domain K(+) channel subunits, such as KCNK2 and KCNK10. In terms of tissue distribution, detected in brain, and at much lower levels in liver, skeletal muscle and testis.

It is found in the cell membrane. It localises to the cell projection. Its subcellular location is the axon. The catalysed reaction is K(+)(in) = K(+)(out). It carries out the reaction Rb(+)(in) = Rb(+)(out). The enzyme catalyses Cs(+)(in) = Cs(+)(out). Activated by various stimuli including intracellular basic pH, mechanical stretch and heat and polyunsaturated fatty acids such as arachidonic acid. K(+) channel that conducts voltage-dependent outward rectifying currents upon membrane depolarization. Voltage sensing is coupled to K(+) electrochemical gradient in an 'ion flux gating' mode where outward but not inward ion flow opens the gate. Converts to voltage-independent 'leak' conductance mode upon stimulation by various stimuli including mechanical membrane stretch, basic pH, heat and lipids. Homo- and heterodimerizes to form functional channels with distinct regulatory and gating properties. At trigeminal A-beta afferent nerves, the heterodimer of KCNK2/TREK-1 and KCNK4/TRAAK is mostly coexpressed at nodes of Ranvier where it conducts voltage-independent mechanosensitive and thermosensitive currents, allowing rapid action potential repolarization, high speed and high frequence saltatory conduction on myelinated nerves to ensure prompt sensory responses. Permeable to other monovalent cations such as Rb(+) and Cs(+). In Rattus norvegicus (Rat), this protein is Potassium channel subfamily K member 4.